The sequence spans 174 residues: Ribosome maturation factor RimP (174 aa).

The protein belongs to the RimP family.

The protein resides in the cytoplasm. Its function is as follows. Required for maturation of 30S ribosomal subunits. The protein is Ribosome maturation factor RimP of Acinetobacter baumannii (strain SDF).